The following is a 308-amino-acid chain: Tetraacyldisaccharide 4'-kinase (308 aa).

An ATP-binding site is contributed by 63-70 (SFGGNGKT).

The protein belongs to the LpxK family.

It carries out the reaction a lipid A disaccharide + ATP = a lipid IVA + ADP + H(+). It functions in the pathway glycolipid biosynthesis; lipid IV(A) biosynthesis; lipid IV(A) from (3R)-3-hydroxytetradecanoyl-[acyl-carrier-protein] and UDP-N-acetyl-alpha-D-glucosamine: step 6/6. In terms of biological role, transfers the gamma-phosphate of ATP to the 4'-position of a tetraacyldisaccharide 1-phosphate intermediate (termed DS-1-P) to form tetraacyldisaccharide 1,4'-bis-phosphate (lipid IVA). The protein is Tetraacyldisaccharide 4'-kinase of Campylobacter jejuni subsp. jejuni serotype O:23/36 (strain 81-176).